Consider the following 732-residue polypeptide: Catalase-peroxidase (732 aa).

A cross-link (tryptophyl-tyrosyl-methioninium (Trp-Tyr) (with M-246)) is located at residues 97–220 (WHSAGTYRTG…LAAVQMGLIY (124 aa)). The active-site Proton acceptor is His-98. Positions 220-246 (YVNPEGPDGKPDPVAAGKDIRETFGRM) form a cross-link, tryptophyl-tyrosyl-methioninium (Tyr-Met) (with W-97). A heme b-binding site is contributed by His-261.

This sequence belongs to the peroxidase family. Peroxidase/catalase subfamily. As to quaternary structure, homodimer or homotetramer. The cofactor is heme b. Post-translationally, formation of the three residue Trp-Tyr-Met cross-link is important for the catalase, but not the peroxidase activity of the enzyme.

The catalysed reaction is H2O2 + AH2 = A + 2 H2O. It carries out the reaction 2 H2O2 = O2 + 2 H2O. Functionally, bifunctional enzyme with both catalase and broad-spectrum peroxidase activity. The chain is Catalase-peroxidase from Chlorobium phaeobacteroides (strain BS1).